The sequence spans 140 residues: ATP synthase epsilon chain (140 aa).

This sequence belongs to the ATPase epsilon chain family. F-type ATPases have 2 components, CF(1) - the catalytic core - and CF(0) - the membrane proton channel. CF(1) has five subunits: alpha(3), beta(3), gamma(1), delta(1), epsilon(1). CF(0) has three main subunits: a, b and c.

The protein resides in the cell membrane. In terms of biological role, produces ATP from ADP in the presence of a proton gradient across the membrane. This chain is ATP synthase epsilon chain, found in Dehalococcoides mccartyi (strain ATCC BAA-2100 / JCM 16839 / KCTC 5957 / BAV1).